Here is a 429-residue protein sequence, read N- to C-terminus: Glutamyl-tRNA reductase (429 aa).

Substrate-binding positions include 50–53 (TCNR), S108, 113–115 (EPQ), and Q119. Catalysis depends on C51, which acts as the Nucleophile. Residue 188 to 193 (GAGEMI) coordinates NADP(+).

Belongs to the glutamyl-tRNA reductase family. As to quaternary structure, homodimer.

It carries out the reaction (S)-4-amino-5-oxopentanoate + tRNA(Glu) + NADP(+) = L-glutamyl-tRNA(Glu) + NADPH + H(+). Its pathway is porphyrin-containing compound metabolism; protoporphyrin-IX biosynthesis; 5-aminolevulinate from L-glutamyl-tRNA(Glu): step 1/2. Its function is as follows. Catalyzes the NADPH-dependent reduction of glutamyl-tRNA(Glu) to glutamate 1-semialdehyde (GSA). The polypeptide is Glutamyl-tRNA reductase (Polaromonas naphthalenivorans (strain CJ2)).